Here is a 175-residue protein sequence, read N- to C-terminus: ATP synthase subunit b (175 aa).

Residues 24–44 (LVLWQIAATVILIIVVRIFLW) traverse the membrane as a helical segment.

Belongs to the ATPase B chain family. As to quaternary structure, F-type ATPases have 2 components, F(1) - the catalytic core - and F(0) - the membrane proton channel. F(1) has five subunits: alpha(3), beta(3), gamma(1), delta(1), epsilon(1). F(0) has three main subunits: a(1), b(2) and c(10-14). The alpha and beta chains form an alternating ring which encloses part of the gamma chain. F(1) is attached to F(0) by a central stalk formed by the gamma and epsilon chains, while a peripheral stalk is formed by the delta and b chains.

The protein resides in the cell membrane. In terms of biological role, f(1)F(0) ATP synthase produces ATP from ADP in the presence of a proton or sodium gradient. F-type ATPases consist of two structural domains, F(1) containing the extramembraneous catalytic core and F(0) containing the membrane proton channel, linked together by a central stalk and a peripheral stalk. During catalysis, ATP synthesis in the catalytic domain of F(1) is coupled via a rotary mechanism of the central stalk subunits to proton translocation. Component of the F(0) channel, it forms part of the peripheral stalk, linking F(1) to F(0). The protein is ATP synthase subunit b of Acholeplasma laidlawii (strain PG-8A).